The following is a 460-amino-acid chain: Cysteine--tRNA ligase (460 aa).

Position 28 (C28) interacts with Zn(2+). Residues 30–40 carry the 'HIGH' region motif; sequence MTVYDYCHLGH. The Zn(2+) site is built by C209, H234, and E238. The 'KMSKS' region motif lies at 266–270; it reads KMSKS. K269 serves as a coordination point for ATP.

It belongs to the class-I aminoacyl-tRNA synthetase family. Monomer. Zn(2+) serves as cofactor.

It is found in the cytoplasm. The catalysed reaction is tRNA(Cys) + L-cysteine + ATP = L-cysteinyl-tRNA(Cys) + AMP + diphosphate. This chain is Cysteine--tRNA ligase, found in Pseudomonas putida (strain ATCC 700007 / DSM 6899 / JCM 31910 / BCRC 17059 / LMG 24140 / F1).